We begin with the raw amino-acid sequence, 448 residues long: Protein giant (448 aa).

Disordered regions lie at residues 23–47 (MHHH…LPVQ), 83–134 (QQHQ…ASPT), 238–259 (VEAT…RPFK), and 298–363 (IRSS…TSSS). The segment covering 30-47 (HHQQQPLHHLPHSQLPVQ) has biased composition (low complexity). Positions 100–112 (DLSRRCDSVETPR) are enriched in basic and acidic residues. Low complexity predominate over residues 115-134 (PSPYQTSYSYGSGSPSASPT). Positions 298–310 (IRSSNGGSRTVTN) are enriched in polar residues. The span at 318 to 333 (SRSGSVNEGSSSNNNS) shows a compositional bias: low complexity. The bZIP domain occupies 384-447 (DAAYYERRRK…AAFTSAKVTT (64 aa)). The segment at 390-406 (RRRKNNAAAKKSRDRRR) is basic motif. The leucine-zipper stretch occupies residues 407-414 (IKEDEIAI).

This sequence belongs to the bZIP family. Homodimer or heterodimer. Phosphorylated at multiple sites.

The protein resides in the nucleus. Represses the expression of both the krueppel and knirps segmentation gap genes. Binds, in vitro, to the krueppel regulatory elements CD1 and CD2. It is required in the early embryo for the development of portions of the head and abdomen. The protein is Protein giant (gt) of Drosophila melanogaster (Fruit fly).